A 70-amino-acid chain; its full sequence is Putative microRNA 17 host gene protein (70 aa).

The Cytoplasmic portion of the chain corresponds to 1–20 (MFCHVDVKISSKRYTWTKLP). Residues 21–43 (LNVPKLVLIYLQSHFVLFFFSMC) traverse the membrane as a helical segment. The Extracellular portion of the chain corresponds to 44-70 (QSIWERPAIGRATTSSASWMVGYDCLL).

As to expression, highly expressed in B-cell lymphoma and lung cancer.

The protein resides in the membrane. In Homo sapiens (Human), this protein is Putative microRNA 17 host gene protein (MIR17HG).